The primary structure comprises 129 residues: Small ribosomal subunit protein uS9 (129 aa).

The interval 108 to 129 is disordered; the sequence is RMVERKKYGKKKARKSFQFSKR. Positions 114–129 are enriched in basic residues; the sequence is KYGKKKARKSFQFSKR.

The protein belongs to the universal ribosomal protein uS9 family.

This chain is Small ribosomal subunit protein uS9, found in Chlorobaculum tepidum (strain ATCC 49652 / DSM 12025 / NBRC 103806 / TLS) (Chlorobium tepidum).